Consider the following 398-residue polypeptide: Type II secretion system protein L (398 aa).

Topologically, residues 1 to 248 (MNNHHTSSAA…RQPTPRRWRP (248 aa)) are cytoplasmic. Residues 249 to 265 (VIVAALALLLLWSSNCL) form a helical membrane-spanning segment. Residues 266–398 (HDHLMLGQQA…GRLTLEGNDA (133 aa)) are Periplasmic-facing.

Belongs to the GSP L family. Type II secretion system is composed of four main components: the outer membrane complex, the inner membrane complex, the cytoplasmic secretion ATPase and the periplasm-spanning pseudopilus. Forms homodimers. Interacts with PulM/GspM. Interacts with PulE/GspE and PulF/GspF.

It is found in the cell inner membrane. Its function is as follows. Inner membrane component of the type II secretion system required for the energy-dependent secretion of extracellular factors such as proteases and toxins from the periplasm. Plays a role in the complex assembly and recruits PulM resulting in a stable complex in the inner membrane. Provides thus a link between the energy-providing PulE protein in the cytoplasm and the rest of the T2SS machinery. The protein is Type II secretion system protein L (pulL) of Klebsiella pneumoniae.